Consider the following 295-residue polypeptide: Ankyrin repeat and SOCS box protein 17 (295 aa).

Residues 146–176 (SGITPLLYVAQTRQSNILKILLQYGILEREK) form an ANK repeat. The SOCS box domain maps to 243 to 295 (DYIPPTRYKDPCELVHLCRITIRTQLLANNMLPNGIFSLLIPTRLQNFLNLES).

It belongs to the ankyrin SOCS box (ASB) family. As to expression, specifically expressed in testis. Localizes to spermatogenic cells in testis, with highest expression in round spermatids and condensing spermatids and lower expression in pachytene spermatocytes.

It functions in the pathway protein modification; protein ubiquitination. Functionally, may be a substrate-recognition component of a SCF-like ECS (Elongin-Cullin-SOCS-box protein) E3 ubiquitin-protein ligase complex which mediates the ubiquitination and subsequent proteasomal degradation of target proteins. In Mus musculus (Mouse), this protein is Ankyrin repeat and SOCS box protein 17 (Asb17).